The primary structure comprises 380 residues: Kappa-type opioid receptor (380 aa).

Over 1–57 (MDSPIQIFRGEPGPTCAPSACLPPNSSAWFPGWAEPDSNGSAGSEDAQLEPAHISPA) the chain is Extracellular. Asn25 and Asn39 each carry an N-linked (GlcNAc...) asparagine glycan. Residues 58–85 (IPVIITAVYSVVFVVGLVGNSLVMFVII) form a helical membrane-spanning segment. Residues 86–95 (RYTKMKTATN) lie on the Cytoplasmic side of the membrane. Residues 96 to 119 (IYIFNLALADALVTTTMPFQSTVY) form a helical membrane-spanning segment. The Extracellular portion of the chain corresponds to 120–132 (LMNSWPFGDVLCK). Cys131 and Cys210 are disulfide-bonded. The chain crosses the membrane as a helical span at residues 133–154 (IVISIDYYNMFTSIFTLTMMSV). At 155-173 (DRYIAVCHPVKALDFRTPL) the chain is on the cytoplasmic side. Residues 174-196 (KAKIINICIWLLSSSVGISAIVL) traverse the membrane as a helical segment. Residues 197–222 (GGTKVREDVDVIECSLQFPDDDYSWW) lie on the Extracellular side of the membrane. The helical transmembrane segment at 223–247 (DLFMKICVFIFAFVIPVLIIIVCYT) threads the bilayer. At 248-274 (LMILRLKSVRLLSGSREKDRNLRRITR) the chain is on the cytoplasmic side. A helical transmembrane segment spans residues 275–296 (LVLVVVAVFVVCWTPIHIFILV). The Extracellular portion of the chain corresponds to 297 to 311 (EALGSTSHSTAALSS). Residues 312-333 (YYFCIALGYTNSSLNPILYAFL) form a helical membrane-spanning segment. The Cytoplasmic portion of the chain corresponds to 334–380 (DENFKRCFRDFCFPLKMRMERQSTSRVRNTVQDPAYLRDIDGMNKPV). Cys345 carries S-palmitoyl cysteine lipidation.

Belongs to the G-protein coupled receptor 1 family. Interacts with NHERF1. Interacts with GABARAPL1. Detected in brain and placenta.

Its subcellular location is the cell membrane. In terms of biological role, G-protein coupled opioid receptor that functions as a receptor for endogenous alpha-neoendorphins and dynorphins, but has low affinity for beta-endorphins. Also functions as a receptor for various synthetic opioids and for the psychoactive diterpene salvinorin A. Ligand binding causes a conformation change that triggers signaling via guanine nucleotide-binding proteins (G proteins) and modulates the activity of down-stream effectors, such as adenylate cyclase. Signaling leads to the inhibition of adenylate cyclase activity. Inhibits neurotransmitter release by reducing calcium ion currents and increasing potassium ion conductance. Plays a role in the perception of pain. Plays a role in mediating reduced physical activity upon treatment with synthetic opioids. Plays a role in the regulation of salivation in response to synthetic opioids. May play a role in arousal and regulation of autonomic and neuroendocrine functions. This chain is Kappa-type opioid receptor (OPRK1), found in Homo sapiens (Human).